The sequence spans 569 residues: Proline--tRNA ligase (569 aa).

The protein belongs to the class-II aminoacyl-tRNA synthetase family. ProS type 1 subfamily. Homodimer.

It is found in the cytoplasm. The enzyme catalyses tRNA(Pro) + L-proline + ATP = L-prolyl-tRNA(Pro) + AMP + diphosphate. Functionally, catalyzes the attachment of proline to tRNA(Pro) in a two-step reaction: proline is first activated by ATP to form Pro-AMP and then transferred to the acceptor end of tRNA(Pro). As ProRS can inadvertently accommodate and process non-cognate amino acids such as alanine and cysteine, to avoid such errors it has two additional distinct editing activities against alanine. One activity is designated as 'pretransfer' editing and involves the tRNA(Pro)-independent hydrolysis of activated Ala-AMP. The other activity is designated 'posttransfer' editing and involves deacylation of mischarged Ala-tRNA(Pro). The misacylated Cys-tRNA(Pro) is not edited by ProRS. The protein is Proline--tRNA ligase of Lactiplantibacillus plantarum (strain ATCC BAA-793 / NCIMB 8826 / WCFS1) (Lactobacillus plantarum).